A 709-amino-acid polypeptide reads, in one-letter code: Heme/hemopexin utilization protein C (709 aa).

The N-terminal stretch at 1–21 is a signal peptide; sequence MRFSKLSLAITTTLVTANALA. Residues 36–147 enclose the TBDR plug domain; that stretch reads DPSRFTYTPQ…LGGVVAMRTP (112 aa). The TBDR beta-barrel domain maps to 158–709; that stretch reads KFGVKIRQGY…NAKISAVYSF (552 aa). The TonB C-terminal box signature appears at 692–709; that stretch reads SLMEGTGRNAKISAVYSF.

This sequence belongs to the TonB-dependent receptor family.

The protein localises to the cell outer membrane. In terms of biological role, required for utilization of free heme at low concentrations. This is Heme/hemopexin utilization protein C (hxuC) from Haemophilus influenzae (strain 86-028NP).